We begin with the raw amino-acid sequence, 174 residues long: MATGPRYLVAFRRRREGRTDYYQRTKLVVADAPRMVVRRTNRHIIVQLVTAEMEGDKTLVSANSAELEKYGYTGATANTPAAYLTGLLFAAKAKKAGQDSAILDIGLNRATPGARVFAALKGAVDGGLEIPYGESILPSEDRLKGEHIAAYNEKAGDIVKNVEQVAAAIKKELV.

It belongs to the universal ribosomal protein uL18 family. Part of the 50S ribosomal subunit. Contacts the 5S and 23S rRNAs.

Its function is as follows. This is one of the proteins that bind and probably mediate the attachment of the 5S RNA into the large ribosomal subunit, where it forms part of the central protuberance. The chain is Large ribosomal subunit protein uL18 from Methanoregula boonei (strain DSM 21154 / JCM 14090 / 6A8).